The sequence spans 355 residues: Cyclic nucleotide-gated potassium channel mll3241 (355 aa).

The Cytoplasmic portion of the chain corresponds to 1–12 (MSVLPFLRIYAP). The helical transmembrane segment at 13-30 (LNAVLAAPGLLAVAALTI) threads the bilayer. Topologically, residues 31–38 (PDMSGRSR) are periplasmic. A helical membrane pass occupies residues 39 to 61 (LALAALLAVIWGAYLLQLAATLL). Residues 62 to 74 (KRRAGVVRDRTPK) lie on the Cytoplasmic side of the membrane. A helical membrane pass occupies residues 75–94 (IAIDVLAVLVPLAAFLLDGS). A helical transmembrane segment spans residues 95-112 (PDWSLYCAVWLLKPLRDS). Over 113–129 (TFFPVLGRVLANEARNL) the chain is Cytoplasmic. A helical membrane pass occupies residues 130 to 150 (IGVTTLFGVVLFAVALAAYVI). Residues 151–161 (ERDIQPEKFGS) lie on the Periplasmic side of the membrane. The segment at residues 162–180 (IPQAMWWAVVTLSTTGYGD) is an intramembrane region (pore-forming). The short motif at 175 to 180 (TTGYGD) is the Selectivity filter element. The Periplasmic portion of the chain corresponds to 181-185 (TIPQS). The helical transmembrane segment at 186–210 (FAGRVLAGAVMMSGIGIFGLWAGIL) threads the bilayer. At 211 to 355 (ATGFYQEVRR…LERRGAAASA (145 aa)) the chain is on the cytoplasmic side. Residues 297–298 (GE), 307–308 (RS), and R348 contribute to the 3',5'-cyclic AMP site.

The protein belongs to the potassium channel family. Homotetramer.

The protein resides in the cell membrane. In terms of biological role, cyclic nucleotide-regulated potassium channel activated by cAMP. This is Cyclic nucleotide-gated potassium channel mll3241 from Mesorhizobium japonicum (strain LMG 29417 / CECT 9101 / MAFF 303099) (Mesorhizobium loti (strain MAFF 303099)).